The primary structure comprises 306 residues: MAIPVIDFSKLDGKERAETMARIANGCEEWGFFQLVNHGIPVELLERVKKVSSECYKLREERFEGSKPVQLLDTLVKEGDGQRLDNVDWEDVFVLQDDNEWPSNPPDFEETMKEYREEIRKLAEKMMEVMDENLGFEKGCIKKAFSGDGQHPPFFGTKVSHYPPCPRLDLVKGLRAHTDAGGVILLFQDDQVGGLQMLKDGRWIDVQPLADAIVINTGDQIEVLSNGRYKSAWHRVLATSHGNRRSIASFYNPSLKATIAPAAGAATEEAAPPALYPKFLFGDYMDVYAKQKYEPKEPRFEAVRAI.

The 101-residue stretch at 153–253 folds into the Fe2OG dioxygenase domain; sequence PFFGTKVSHY…RRSIASFYNP (101 aa). Fe cation is bound by residues H177, D179, and H234.

Belongs to the iron/ascorbate-dependent oxidoreductase family. It depends on Fe cation as a cofactor.

It carries out the reaction 1-aminocyclopropane-1-carboxylate + L-ascorbate + O2 = ethene + L-dehydroascorbate + hydrogen cyanide + CO2 + 2 H2O. It participates in alkene biosynthesis; ethylene biosynthesis via S-adenosyl-L-methionine; ethylene from S-adenosyl-L-methionine: step 2/2. In Musa acuminata (Banana), this protein is 1-aminocyclopropane-1-carboxylate oxidase (MAO1B).